The chain runs to 347 residues: Phosphate acyltransferase (347 aa).

It belongs to the PlsX family. In terms of assembly, homodimer. Probably interacts with PlsY.

It is found in the cytoplasm. The enzyme catalyses a fatty acyl-[ACP] + phosphate = an acyl phosphate + holo-[ACP]. It participates in lipid metabolism; phospholipid metabolism. In terms of biological role, catalyzes the reversible formation of acyl-phosphate (acyl-PO(4)) from acyl-[acyl-carrier-protein] (acyl-ACP). This enzyme utilizes acyl-ACP as fatty acyl donor, but not acyl-CoA. This chain is Phosphate acyltransferase, found in Syntrophotalea carbinolica (strain DSM 2380 / NBRC 103641 / GraBd1) (Pelobacter carbinolicus).